We begin with the raw amino-acid sequence, 97 residues long: uncharacterized protein (97 aa).

A disordered region spans residues 72–97 (TVERKRSEHTNSRKKDPSAYTWSDVK). The segment covering 73 to 88 (VERKRSEHTNSRKKDP) has biased composition (basic and acidic residues).

Belongs to the chlamydial CPn_0121/CT_031/TC_0300 family.

This is an uncharacterized protein from Chlamydia pneumoniae (Chlamydophila pneumoniae).